Reading from the N-terminus, the 539-residue chain is Chaperonin GroEL (539 aa).

ATP is bound by residues 29–32 (TLGP), 86–90 (DGTTT), glycine 413, 479–481 (DAL), and aspartate 495.

It belongs to the chaperonin (HSP60) family. Forms a cylinder of 14 subunits composed of two heptameric rings stacked back-to-back. Interacts with the co-chaperonin GroES.

The protein resides in the cytoplasm. It carries out the reaction ATP + H2O + a folded polypeptide = ADP + phosphate + an unfolded polypeptide.. Functionally, together with its co-chaperonin GroES, plays an essential role in assisting protein folding. The GroEL-GroES system forms a nano-cage that allows encapsulation of the non-native substrate proteins and provides a physical environment optimized to promote and accelerate protein folding. This Pseudothermotoga lettingae (strain ATCC BAA-301 / DSM 14385 / NBRC 107922 / TMO) (Thermotoga lettingae) protein is Chaperonin GroEL.